A 300-amino-acid chain; its full sequence is uncharacterized protein (300 aa).

A signal peptide spans 1-22; it reads MKSFVWTLLGALSLGSLTTAYG.

It is found in the endoplasmic reticulum. This is an uncharacterized protein from Schizosaccharomyces pombe (strain 972 / ATCC 24843) (Fission yeast).